The chain runs to 633 residues: DNA topoisomerase 4 subunit B (633 aa).

ATP-binding positions include Tyr-5, Asn-45, Asp-72, 113–119, and Lys-337; that span reads GLHGVGA. One can recognise a Toprim domain in the interval 419–534; it reads KELFIVEGDS…LGHVYLALPP (116 aa). Glu-425, Asp-499, and Asp-501 together coordinate Mg(2+).

This sequence belongs to the type II topoisomerase family. ParE type 2 subfamily. In terms of assembly, heterotetramer composed of ParC and ParE. It depends on Mg(2+) as a cofactor. Mn(2+) is required as a cofactor. Requires Ca(2+) as cofactor.

The enzyme catalyses ATP-dependent breakage, passage and rejoining of double-stranded DNA.. In terms of biological role, topoisomerase IV is essential for chromosome segregation. It relaxes supercoiled DNA. Performs the decatenation events required during the replication of a circular DNA molecule. The protein is DNA topoisomerase 4 subunit B of Mycoplasma genitalium (strain ATCC 33530 / DSM 19775 / NCTC 10195 / G37) (Mycoplasmoides genitalium).